We begin with the raw amino-acid sequence, 175 residues long: ATP-dependent protease subunit HslV (175 aa).

Thr2 is a catalytic residue. 3 residues coordinate Na(+): Ala159, Asp162, and Thr165.

The protein belongs to the peptidase T1B family. HslV subfamily. A double ring-shaped homohexamer of HslV is capped on each side by a ring-shaped HslU homohexamer. The assembly of the HslU/HslV complex is dependent on binding of ATP.

The protein resides in the cytoplasm. The enzyme catalyses ATP-dependent cleavage of peptide bonds with broad specificity.. Allosterically activated by HslU binding. Its function is as follows. Protease subunit of a proteasome-like degradation complex believed to be a general protein degrading machinery. This Ligilactobacillus salivarius (strain UCC118) (Lactobacillus salivarius) protein is ATP-dependent protease subunit HslV.